The chain runs to 164 residues: Lipoprotein signal peptidase (164 aa).

The next 3 helical transmembrane spans lie at tryptophan 12–glutamine 32, tryptophan 70–serine 90, and alanine 102–valine 122. Catalysis depends on residues aspartate 123 and aspartate 141. Residues phenylalanine 137 to leucine 157 form a helical membrane-spanning segment.

This sequence belongs to the peptidase A8 family.

It is found in the cell inner membrane. The catalysed reaction is Release of signal peptides from bacterial membrane prolipoproteins. Hydrolyzes -Xaa-Yaa-Zaa-|-(S,diacylglyceryl)Cys-, in which Xaa is hydrophobic (preferably Leu), and Yaa (Ala or Ser) and Zaa (Gly or Ala) have small, neutral side chains.. It participates in protein modification; lipoprotein biosynthesis (signal peptide cleavage). This protein specifically catalyzes the removal of signal peptides from prolipoproteins. The sequence is that of Lipoprotein signal peptidase from Shigella sonnei (strain Ss046).